The chain runs to 1459 residues: NKSRKRRNRLSFLGAATVEPPKPIPLTWKTEKPVWVNQWPLPKQKLEALHLLANEQLEKGHIEPSFSPWNSPVFVIQKKSGKWRMLTDLRAVNAVIQPMGPLQPGLPSPAMIPKDWPLIIIDLKDCFFTIPLAEQDCEKFAFTIPAINNKEPATRFQWKVLPQGMLNSPTICQTFVGRALQPVREKFSDCYIIHYIDDILCAAETRDKLIDCYTFLQAEVANAGLAIASDKIQTSTPFHYLGMQIENRKIKQQKIEIRKDTLKTLNDFQKLLGDINWIRPTLGIPTYAMSNLFSILRGDSDLNSKRILTPEATKEIKLVEEKIQSAQINRIDPLAPLQLLIFATAHSPTGIIIQNTDLVEWSFLPHSTVKTFTLYLDQIATLIGQTRLRIIKLCGNDPDKIVVPLTKEQVRQAFINSGAWQIGLANFVGIIDNHYPKTKIFQFLKLTTWILPKITRREPLENALTVFTDGSSNGKAAYTGPKERVIKTPYQSAQRAELVAVITVLQDFDQPINIISDSAYVVQATRDVETALIKYSMDDQLNQLFNLLQQTVRKRNFPFYITHIRAHTNLPGPLTKANEQADLLVSSALIKAQELHALTHVNAAGLKNKFDVTWKQAKDIVQHCTQCQILHLPTQEAGVNPRGLCPNALWQMDVTHVPSFGRLSYVHVTVDTYSHFIWATCQTGESTSHVKKHLLSCFAVMGVPEKIKTDNGPGYCSKAFQKFLSQWKISHTTGIPYNSQGQAIVERTNRTLKTQLVKQKEGGDSKECTTPQMQLNLALYTLNFLNIYRNQTTTSAEQHLTGKKNSPHEGKLIWWKDNKNKTWEIGKVITWGRGFACVSPGENQLPVWIPTRHLKFYNEPIGDAKKRASTEMVTPVTWMDNPIEIYVNDSVWVPGPIDDRCPAKPEEEGMMINISIGYRYPPICLGRAPGCLMPAVQNWLVEVPTVSPISRFTYHMVSGMSLRPRVNYLQDFSYQRSLKFRPKGKPCPKEIPKESKNTEVLVWEECVANSAVILQNNEFGTIIDWAPRGQFYHNCSGQTQSCPSAQVSPAVDSDLTESLDKHKHKKLQSFYPWEWGEKGISTPRPKIVSPVSGPEHPELWRLTVASHHIRIWSGNQTLETRDCKPFYTIDLNSSLTVPLQSCVKPPYMLVVGNIVIKPDSQTITCENCRLLTCIDSTFNWQHRILLVRAREGVWIPVSMDRPWEASPSVHILTEVLKGVLNRSKRFIFTLIAVIMGLIAVTATAAVAGVALHSSVQSVNFVNDWQKNSTRLWNSQSSIDQKLANQINDLRQTVIWMGDRLMSLEHRFQLQCDWNTSDFCITPQIYNESEHHWDMVRRHLQGREDNLTLDISKLKEQIFEASKAHLNLVPGTEAIAGVADGLANLNPVTWVKTIGSTTIINLILILVCLFCLLLVCRCTQQLRRDSDHRERAMMTMAVLSKRKGGNVGKSKRDQIVTVSV.

The Reverse transcriptase domain maps to 57-245; sequence LEKGHIEPSF…TPFHYLGMQI (189 aa). The LPQG motif lies at 161 to 164; it reads LPQG. Residues 195–198 carry the YXDD motif; sequence YIDD. The RNase H type-1 domain maps to 460–590; the sequence is LENALTVFTD…ADLLVSSALI (131 aa). Mg(2+) is bound by residues aspartate 469, glutamate 497, aspartate 517, and aspartate 582. The segment at 587-628 adopts an Integrase-type zinc-finger fold; sequence SALIKAQELHALTHVNAAGLKNKFDVTWKQAKDIVQHCTQCQ. Zn(2+) contacts are provided by histidine 596, histidine 600, cysteine 624, and cysteine 627. Positions 642 to 803 constitute an Integrase catalytic domain; sequence RGLCPNALWQ…TSAEQHLTGK (162 aa). The integrase-type DNA-binding region spans 811-859; that stretch reads KLIWWKDNKNKTWEIGKVITWGRGFACVSPGENQLPVWIPTRHLKFYNE.

The protein belongs to the beta type-B retroviral polymerase family. HERV class-II K(HML-2) pol subfamily.

The catalysed reaction is DNA(n) + a 2'-deoxyribonucleoside 5'-triphosphate = DNA(n+1) + diphosphate. It catalyses the reaction Endonucleolytic cleavage to 5'-phosphomonoester.. Early post-infection, the reverse transcriptase converts the viral RNA genome into double-stranded viral DNA. The RNase H domain of the reverse transcriptase performs two functions. It degrades the RNA template and specifically removes the RNA primer from the RNA/DNA hybrid. Following nuclear import, the integrase catalyzes the insertion of the linear, double-stranded viral DNA into the host cell chromosome. Endogenous Pol proteins may have kept, lost or modified their original function during evolution. In Homo sapiens (Human), this protein is Endogenous retrovirus group K member 7 Pol protein (ERVK-7).